The sequence spans 460 residues: Chromosomal replication initiator protein DnaA (460 aa).

Residues Met-1–Ala-84 are domain I, interacts with DnaA modulators. A domain II region spans residues Ala-84–Ser-123. Residues Lys-103–Ser-123 are disordered. The domain III, AAA+ region stretch occupies residues Asn-124–Ala-340. ATP is bound by residues Gly-168, Gly-170, Lys-171, and Thr-172. The domain IV, binds dsDNA stretch occupies residues Asn-341–Ser-460.

It belongs to the DnaA family. As to quaternary structure, oligomerizes as a right-handed, spiral filament on DNA at oriC.

The protein resides in the cytoplasm. Its function is as follows. Plays an essential role in the initiation and regulation of chromosomal replication. ATP-DnaA binds to the origin of replication (oriC) to initiate formation of the DNA replication initiation complex once per cell cycle. Binds the DnaA box (a 9 base pair repeat at the origin) and separates the double-stranded (ds)DNA. Forms a right-handed helical filament on oriC DNA; dsDNA binds to the exterior of the filament while single-stranded (ss)DNA is stabiized in the filament's interior. The ATP-DnaA-oriC complex binds and stabilizes one strand of the AT-rich DNA unwinding element (DUE), permitting loading of DNA polymerase. After initiation quickly degrades to an ADP-DnaA complex that is not apt for DNA replication. Binds acidic phospholipids. This Shewanella sp. (strain MR-4) protein is Chromosomal replication initiator protein DnaA.